Reading from the N-terminus, the 489-residue chain is Acetyl-coenzyme A carboxylase carboxyl transferase subunit beta, chloroplastic (489 aa).

In terms of domain architecture, CoA carboxyltransferase N-terminal spans 222 to 489; sequence LWVQCENCYG…FFPLNSNSIK (268 aa). The Zn(2+) site is built by cysteine 226, cysteine 229, cysteine 245, and cysteine 248. The segment at 226-248 adopts a C4-type zinc-finger fold; sequence CENCYGLNYKKFFRSKMNICEQC.

The protein belongs to the AccD/PCCB family. Acetyl-CoA carboxylase is a heterohexamer composed of biotin carboxyl carrier protein, biotin carboxylase and 2 subunits each of ACCase subunit alpha and ACCase plastid-coded subunit beta (accD). Requires Zn(2+) as cofactor.

It localises to the plastid. Its subcellular location is the chloroplast stroma. The enzyme catalyses N(6)-carboxybiotinyl-L-lysyl-[protein] + acetyl-CoA = N(6)-biotinyl-L-lysyl-[protein] + malonyl-CoA. It functions in the pathway lipid metabolism; malonyl-CoA biosynthesis; malonyl-CoA from acetyl-CoA: step 1/1. Its function is as follows. Component of the acetyl coenzyme A carboxylase (ACC) complex. Biotin carboxylase (BC) catalyzes the carboxylation of biotin on its carrier protein (BCCP) and then the CO(2) group is transferred by the transcarboxylase to acetyl-CoA to form malonyl-CoA. In Buxus microphylla (Littleleaf boxwood), this protein is Acetyl-coenzyme A carboxylase carboxyl transferase subunit beta, chloroplastic.